The primary structure comprises 489 residues: Otolin-1-A (489 aa).

Residues 1-23 form the signal peptide; that stretch reads MPNILHPFIIIMTLLVVATGNQA. Residues 27-57 are disordered; that stretch reads KTTQWPRMKPTKKPPPRDEGPSKLGSISTTV. Asn-109 carries N-linked (GlcNAc...) asparagine glycosylation. The segment at 133–335 is disordered; that stretch reads GPVGEKGLPG…PGMKGTRGLK (203 aa). Positions 142–151 are enriched in gly residues; sequence GIPGGKGEMG. Collagen-like domains lie at 145–204, 205–255, and 264–323; these read GGKG…KGDK, GDTG…KGDK, and GQKG…PGQR. The segment covering 192–206 has biased composition (basic and acidic residues); the sequence is QGEKGESGPKGDKGD. A glycan (N-linked (GlcNAc...) asparagine) is linked at Asn-225. The segment covering 226-235 has biased composition (gly residues); sequence GTKGGMGEPG. Basic and acidic residues predominate over residues 248–257; sequence IKGEKGDKGD. Asn-287 carries N-linked (GlcNAc...) asparagine glycosylation. Positions 290–310 are enriched in low complexity; the sequence is DGLPGSKGPKGDPGPLSKQGE. One can recognise a C1q domain in the interval 351–488; the sequence is AVQKRSAFSV…GFLLYADATK (138 aa). N-linked (GlcNAc...) asparagine glycosylation is found at Asn-391 and Asn-396.

It belongs to the OTOL1 family. As to quaternary structure, homooligomer; disulfide-linked; probably forms homotrimers. Interacts with otomp.

Its subcellular location is the secreted. The protein resides in the extracellular space. It localises to the extracellular matrix. Functionally, collagen-like protein, which provides an organic scaffold for otoliths onto the sensory epithelium of the inner ear. Acts as a scaffold for biomineralization by sequestering calcium. The sequence is that of Otolin-1-A (otol1a) from Danio rerio (Zebrafish).